We begin with the raw amino-acid sequence, 164 residues long: Dynein regulatory complex protein 8 (164 aa).

2 consecutive EF-hand domains span residues 16–51 (ELHK…LGCC) and 94–129 (AAED…EGEP).

The protein belongs to the DRC8 family. As to quaternary structure, component of the nexin-dynein regulatory complex (N-DRC).

The protein localises to the cytoplasm. It is found in the cytoskeleton. Its subcellular location is the flagellum axoneme. Component of the nexin-dynein regulatory complex (N-DRC), a key regulator of ciliary/flagellar motility which maintains the alignment and integrity of the distal axoneme and regulates microtubule sliding in motile axonemes. The chain is Dynein regulatory complex protein 8 (Efcab2) from Mus musculus (Mouse).